The following is a 209-amino-acid chain: Uracil phosphoribosyltransferase (209 aa).

5-phospho-alpha-D-ribose 1-diphosphate contacts are provided by residues R79, R104, and 131–139; that span reads DPMLATGGS. Uracil-binding positions include I194 and 199–201; that span reads GDA. D200 serves as a coordination point for 5-phospho-alpha-D-ribose 1-diphosphate.

The protein belongs to the UPRTase family. Mg(2+) serves as cofactor.

The catalysed reaction is UMP + diphosphate = 5-phospho-alpha-D-ribose 1-diphosphate + uracil. It functions in the pathway pyrimidine metabolism; UMP biosynthesis via salvage pathway; UMP from uracil: step 1/1. Its activity is regulated as follows. Allosterically activated by GTP. In terms of biological role, catalyzes the conversion of uracil and 5-phospho-alpha-D-ribose 1-diphosphate (PRPP) to UMP and diphosphate. The polypeptide is Uracil phosphoribosyltransferase (Exiguobacterium sp. (strain ATCC BAA-1283 / AT1b)).